The chain runs to 421 residues: MALVVQKYGGSSVADAERIRRVAERIVETKKAGNDVVVVVSAMGDTTDDLLDLARQVSPAPPPREMDMLLTAGERISNALVAMAIESLGAQARSFTGSQAGVITTGTHGNAKIIDVTPGRLRDALDEGQIVLVAGFQGVSQDSKDVTTLGRGGSDTTAVAVAAALDADVCEIYTDVDGIFTADPRIVPNARHLDTVSFEEMLEMAACGAKVLMLRCVEYARRYNVPIHVRSSYSDKPGTIVKGSIEDIPMEDAILTGVAHDRSEAKVTVVGLPDVPGYAAKVFRAVAEADVNIDMVLQNISKIEDGKTDITFTCARDNGPRAVEKLSALKSEIGFSQVLYDDHIGKVSLIGAGMRSHPGVTATFCEALAEAGINIDLISTSEIRISVLIKDTELDKAVSALHEAFGLGGDDEAVVYAGTGR.

Residue 7–10 coordinates ATP; that stretch reads KYGG. 25–30 contacts substrate; the sequence is RIVETK. ATP is bound at residue S41. Residues 45–49, E74, 125–126, 151–154, and S154 contribute to the substrate site; these read DTTDD, LD, and RGGS. ATP is bound by residues 174–175, 180–185, and K210; these read TD and FTADPR. ACT domains are found at residues 267–348 and 349–421; these read VTVV…GKVS and LIGA…GTGR. Residues D274, 274-279, 292-294, Q298, 360-361, 374-375, and 381-382 each bind substrate; these read DVPGYA, NID, VT, NI, and SE.

The protein belongs to the aspartokinase family. As to quaternary structure, heterotetramer consisting of 2 isoforms Alpha (catalytic and regulation) and of a homodimer of 2 isoforms Beta (regulation).

It carries out the reaction L-aspartate + ATP = 4-phospho-L-aspartate + ADP. It participates in amino-acid biosynthesis; L-lysine biosynthesis via DAP pathway; (S)-tetrahydrodipicolinate from L-aspartate: step 1/4. Its pathway is amino-acid biosynthesis; L-methionine biosynthesis via de novo pathway; L-homoserine from L-aspartate: step 1/3. The protein operates within amino-acid biosynthesis; L-threonine biosynthesis; L-threonine from L-aspartate: step 1/5. Feedback inhibition by lysine and threonine. Catalyzes the phosphorylation of the beta-carboxyl group of aspartic acid with ATP to yield 4-phospho-L-aspartate, which is involved in the branched biosynthetic pathway leading to the biosynthesis of amino acids lysine, threonine, isoleucine and methionine. The polypeptide is Aspartokinase (ask) (Mycolicibacterium smegmatis (Mycobacterium smegmatis)).